A 519-amino-acid chain; its full sequence is Putative cytochrome P450 CYP13A10 (519 aa).

The chain crosses the membrane as a helical span at residues 3–23 (VILLAIPTLFIGFISYYLWIW). C465 serves as a coordination point for heme.

Belongs to the cytochrome P450 family. Heme is required as a cofactor.

Its subcellular location is the membrane. Functionally, cytochromes P450 are a group of heme-thiolate monooxygenases. They oxidize a variety of structurally unrelated compounds, including steroids, fatty acids, and xenobiotics. This chain is Putative cytochrome P450 CYP13A10 (cyp-13A10), found in Caenorhabditis elegans.